We begin with the raw amino-acid sequence, 220 residues long: Type-4 uracil-DNA glycosylase (220 aa).

[4Fe-4S] cluster-binding residues include Cys14 and Cys17. Uracil is bound by residues Gly41–Ala43, Phe55, and Asn82. [4Fe-4S] cluster is bound by residues Cys86 and Cys102. Position 164 (His164) interacts with uracil.

The protein belongs to the uracil-DNA glycosylase (UDG) superfamily. Type 4 (UDGa) family.

The enzyme catalyses Hydrolyzes single-stranded DNA or mismatched double-stranded DNA and polynucleotides, releasing free uracil.. Removes uracil bases that are present in DNA as a result of either deamination of cytosine or misincorporation of dUMP instead of dTMP. The protein is Type-4 uracil-DNA glycosylase of Sulfurisphaera tokodaii (strain DSM 16993 / JCM 10545 / NBRC 100140 / 7) (Sulfolobus tokodaii).